The following is a 160-amino-acid chain: Surface-adhesin protein E (160 aa).

A signal peptide spans 1–15 (MKKIILTLSLGLLTA). A lipid anchor (N-palmitoyl cysteine) is attached at cysteine 16. Cysteine 16 carries S-diacylglycerol cysteine lipidation.

The protein localises to the cell outer membrane. The protein resides in the cell surface. In terms of biological role, acts as a multifunctional adhesin involved in direct interactions with host epithelial cells and host proteins. In Haemophilus influenzae (strain ATCC 51907 / DSM 11121 / KW20 / Rd), this protein is Surface-adhesin protein E (pe).